Reading from the N-terminus, the 260-residue chain is MPKRTYAMRYVAGQPVEQIFPGAAKQLDKGLPLGEPLPTAELLRVVVWNIFKQQRAGWLPVLKELGRDTQLMLLQEAQTTPELVRFATASYQAADQVPAFSLPQHPSGVMTLAAAHPVYCCPLREREPLLRLSKSALVTVYPIHDGRLLMVVNIHAVNFSLGVDVYSKQLDPIGDQIASHRGPVILAGDFNAWSRQRINALQHFAQDAGLQEVEFRVDHRSRAFGRPLDFIFYRGLTVIDASVLVTRASDHNPLIVEFQP.

This sequence belongs to the UPF0294 family.

It localises to the cytoplasm. The sequence is that of UPF0294 protein YPO1077/y3099/YP_2772 from Yersinia pestis.